A 160-amino-acid chain; its full sequence is Putative lipoprotein YfiB (160 aa).

The first 18 residues, 1–18, serve as a signal peptide directing secretion; that stretch reads MIKHLVAPLVFTSLILTG. Cys-19 carries N-palmitoyl cysteine lipidation. A lipid anchor (S-diacylglycerol cysteine) is attached at Cys-19. The region spanning 43–160 is the OmpA-like domain; it reads AGDWSLGLSD…RRVAVVITTP (118 aa).

It belongs to the outer membrane OOP (TC 1.B.6) superfamily.

The protein localises to the cell membrane. This chain is Putative lipoprotein YfiB (yfiB), found in Escherichia coli (strain K12).